The sequence spans 548 residues: ATP synthase subunit alpha (548 aa).

172 to 179 (GDRKTGKT) contributes to the ATP binding site. The tract at residues 526-548 (AEAMDEADVEKESVKVRKPAPKK) is disordered.

Belongs to the ATPase alpha/beta chains family. F-type ATPases have 2 components, CF(1) - the catalytic core - and CF(0) - the membrane proton channel. CF(1) has five subunits: alpha(3), beta(3), gamma(1), delta(1), epsilon(1). CF(0) has three main subunits: a(1), b(2) and c(9-12). The alpha and beta chains form an alternating ring which encloses part of the gamma chain. CF(1) is attached to CF(0) by a central stalk formed by the gamma and epsilon chains, while a peripheral stalk is formed by the delta and b chains.

It localises to the cell membrane. The enzyme catalyses ATP + H2O + 4 H(+)(in) = ADP + phosphate + 5 H(+)(out). In terms of biological role, produces ATP from ADP in the presence of a proton gradient across the membrane. The alpha chain is a regulatory subunit. This chain is ATP synthase subunit alpha, found in Mycolicibacterium vanbaalenii (strain DSM 7251 / JCM 13017 / BCRC 16820 / KCTC 9966 / NRRL B-24157 / PYR-1) (Mycobacterium vanbaalenii).